The sequence spans 894 residues: DNA mismatch repair protein MutS (894 aa).

Position 607–614 (607–614 (GPNMSGKS)) interacts with ATP.

The protein belongs to the DNA mismatch repair MutS family.

This protein is involved in the repair of mismatches in DNA. It is possible that it carries out the mismatch recognition step. This protein has a weak ATPase activity. This Bacillus cereus (strain ZK / E33L) protein is DNA mismatch repair protein MutS.